The following is a 449-amino-acid chain: MVKPTDYLTVTALTQYLKAKFERDPYLDRVYLTGEISNFRLRPNAHQYFSLKDNKAKISAIMFKSAFEKVKFTPEEGMKVLIVGRISLYEASGNYQIYVERMEPDGLGALYQAYEQLKAKLATEGLFDAPKQPLVRFPKRIAVITSPSGAVIRDIITTTQRRYPIAQLVLFPAVVQGDGAADVLVERLKQVNEHGDFDTIIIGRGGGSIEDLWPFNEERVARAIVASQIPVISSVGHETDTTIADLVADVRAATPTAAAELATPVLTDEILKLQQQRLRLYQAFSKTVALNKKQLDHLQNSYVLKQPKRLYDGYLQNVDQLQRRLLTAQQQLLKDRRQQVQLLQQRLMAQSPLMAVRQAQKDVTEQQRRLNQAMNRLMADRRQKAAQVIAALDLVSPLKILGRGFAYVTDDQQQMLKKVADFKTQQPIELHVQDGLVTAEVVATHKGEE.

The protein belongs to the XseA family. As to quaternary structure, heterooligomer composed of large and small subunits.

The protein localises to the cytoplasm. The enzyme catalyses Exonucleolytic cleavage in either 5'- to 3'- or 3'- to 5'-direction to yield nucleoside 5'-phosphates.. Bidirectionally degrades single-stranded DNA into large acid-insoluble oligonucleotides, which are then degraded further into small acid-soluble oligonucleotides. This is Exodeoxyribonuclease 7 large subunit from Latilactobacillus sakei subsp. sakei (strain 23K) (Lactobacillus sakei subsp. sakei).